Reading from the N-terminus, the 375-residue chain is Trichodiene synthase (375 aa).

The protein belongs to the trichodiene synthase family.

The enzyme catalyses (2E,6E)-farnesyl diphosphate = trichodiene + diphosphate. The protein operates within sesquiterpene biosynthesis; trichothecene biosynthesis. Its function is as follows. TS is a member of the terpene cyclase group of enzymes. It catalyzes the isomerization and cyclization of farnesyl pyro-phosphate to form trichodiene, the first cyclic intermediate in the biosynthetic pathway for trichothecenes. It serves to branch trichothecene biosynthesis from the isoprenoid pathway. In Fusarium pseudograminearum (Wheat and barley crown-rot fungus), this protein is Trichodiene synthase (TRI5).